The sequence spans 744 residues: Glucosamine inositolphosphorylceramide transferase 1 (744 aa).

Helical transmembrane passes span phenylalanine 31 to valine 51, serine 378 to valine 398, and leucine 460 to leucine 480. Residues asparagine 534, asparagine 558–arginine 563, aspartate 579–aspartate 581, arginine 609, and phenylalanine 665–aspartate 669 each bind substrate. Aspartate 581 contributes to the Mn(2+) binding site. Cysteine 667 and cysteine 718 are oxidised to a cystine. The active site involves aspartate 669.

The protein belongs to the glycosyltransferase 64 family. The cofactor is Mn(2+).

It localises to the membrane. It functions in the pathway sphingolipid metabolism. Functionally, essential protein. Glycosyltransferase that mediates the glycosylation of glycosylinositol phosphorylceramides (GIPCs), the major sphingolipids in the plasma membrane; acts as a HexN(Ac)-specific GIPC sugar transferase. Responsible for the glycosylation of a subgroup of GIPCs found in seeds and pollen that contain GlcNAc and GlcN (GlcN(Ac)). Maybe involved in the maintenance of cell-cell adhesion. The sequence is that of Glucosamine inositolphosphorylceramide transferase 1 from Oryza sativa subsp. indica (Rice).